The sequence spans 169 residues: Peptide methionine sulfoxide reductase MsrA (169 aa).

Residue cysteine 11 is part of the active site.

It belongs to the MsrA Met sulfoxide reductase family.

The catalysed reaction is L-methionyl-[protein] + [thioredoxin]-disulfide + H2O = L-methionyl-(S)-S-oxide-[protein] + [thioredoxin]-dithiol. It carries out the reaction [thioredoxin]-disulfide + L-methionine + H2O = L-methionine (S)-S-oxide + [thioredoxin]-dithiol. Has an important function as a repair enzyme for proteins that have been inactivated by oxidation. Catalyzes the reversible oxidation-reduction of methionine sulfoxide in proteins to methionine. The chain is Peptide methionine sulfoxide reductase MsrA from Leifsonia xyli subsp. xyli (strain CTCB07).